We begin with the raw amino-acid sequence, 41 residues long: Large ribosomal subunit protein bL36 (41 aa).

Belongs to the bacterial ribosomal protein bL36 family.

In Methylobacterium nodulans (strain LMG 21967 / CNCM I-2342 / ORS 2060), this protein is Large ribosomal subunit protein bL36.